A 141-amino-acid polypeptide reads, in one-letter code: Putative nickel-responsive regulator (141 aa).

Ni(2+) is bound by residues His-80, His-91, His-93, and Cys-99.

This sequence belongs to the transcriptional regulatory CopG/NikR family. The cofactor is Ni(2+).

In terms of biological role, transcriptional regulator. The chain is Putative nickel-responsive regulator from Methanococcus vannielii (strain ATCC 35089 / DSM 1224 / JCM 13029 / OCM 148 / SB).